Consider the following 296-residue polypeptide: Ribosomal RNA small subunit methyltransferase H (296 aa).

S-adenosyl-L-methionine-binding positions include 38–40, E57, F88, D103, and H110; that span reads GAH.

The protein belongs to the methyltransferase superfamily. RsmH family.

The protein resides in the cytoplasm. It carries out the reaction cytidine(1402) in 16S rRNA + S-adenosyl-L-methionine = N(4)-methylcytidine(1402) in 16S rRNA + S-adenosyl-L-homocysteine + H(+). Functionally, specifically methylates the N4 position of cytidine in position 1402 (C1402) of 16S rRNA. This Borreliella afzelii (strain PKo) (Borrelia afzelii) protein is Ribosomal RNA small subunit methyltransferase H.